We begin with the raw amino-acid sequence, 78 residues long: Large ribosomal subunit protein bL28 (78 aa).

It belongs to the bacterial ribosomal protein bL28 family.

In Synechococcus sp. (strain CC9605), this protein is Large ribosomal subunit protein bL28.